Here is a 116-residue protein sequence, read N- to C-terminus: Large ribosomal subunit protein bL19 (116 aa).

Belongs to the bacterial ribosomal protein bL19 family.

In terms of biological role, this protein is located at the 30S-50S ribosomal subunit interface and may play a role in the structure and function of the aminoacyl-tRNA binding site. In Pasteurella multocida (strain Pm70), this protein is Large ribosomal subunit protein bL19.